A 342-amino-acid chain; its full sequence is N-acetyl-gamma-glutamyl-phosphate reductase (342 aa).

The active site involves C147.

This sequence belongs to the NAGSA dehydrogenase family. Type 1 subfamily.

The protein resides in the cytoplasm. The catalysed reaction is N-acetyl-L-glutamate 5-semialdehyde + phosphate + NADP(+) = N-acetyl-L-glutamyl 5-phosphate + NADPH + H(+). It participates in amino-acid biosynthesis; L-arginine biosynthesis; N(2)-acetyl-L-ornithine from L-glutamate: step 3/4. Catalyzes the NADPH-dependent reduction of N-acetyl-5-glutamyl phosphate to yield N-acetyl-L-glutamate 5-semialdehyde. The sequence is that of N-acetyl-gamma-glutamyl-phosphate reductase from Campylobacter jejuni subsp. jejuni serotype O:6 (strain 81116 / NCTC 11828).